We begin with the raw amino-acid sequence, 369 residues long: 2-aminoethylphosphonate--pyruvate transaminase (369 aa).

An N6-(pyridoxal phosphate)lysine modification is found at Lys-193.

The protein belongs to the class-V pyridoxal-phosphate-dependent aminotransferase family. PhnW subfamily. In terms of assembly, homodimer. Requires pyridoxal 5'-phosphate as cofactor.

The enzyme catalyses (2-aminoethyl)phosphonate + pyruvate = phosphonoacetaldehyde + L-alanine. In terms of biological role, involved in phosphonate degradation. This chain is 2-aminoethylphosphonate--pyruvate transaminase, found in Burkholderia pseudomallei (strain 1106a).